Reading from the N-terminus, the 230-residue chain is MAQFWAEGSLEKNNALVEYLKQYGVVRTDKVAEVMETIDRALFVPEGFTPYTDSPMPIGYNATISAPHMHATCLELLKDYLQPGMHALDVGSGSGYLTACFAMMVGPEGRAVGIEHIPELVVASTENVERSAAAALMKDGSLSFHVSDGRLGWPDAAPYDAIHVGAAAPEIPRPLLEQLKPGGRMVIPVGTYSQDLQVIDKSADGSTSVRNDASVRYVPLTSRSAQLQDS.

Serine 65 is an active-site residue.

Belongs to the methyltransferase superfamily. L-isoaspartyl/D-aspartyl protein methyltransferase family. As to quaternary structure, monomer. As to expression, highest contents in seeds.

It localises to the cytoplasm. The catalysed reaction is [protein]-L-isoaspartate + S-adenosyl-L-methionine = [protein]-L-isoaspartate alpha-methyl ester + S-adenosyl-L-homocysteine. Catalyzes the methyl esterification of L-isoaspartyl residues in peptides and proteins that result from spontaneous decomposition of normal L-aspartyl and L-asparaginyl residues. It plays a role in the repair and/or degradation of damaged proteins. This enzyme does not act on D-aspartyl residues. This chain is Protein-L-isoaspartate O-methyltransferase (PCM), found in Triticum aestivum (Wheat).